A 230-amino-acid polypeptide reads, in one-letter code: Cytidylate kinase (230 aa).

An ATP-binding site is contributed by 12 to 20 (GPSGAGKGT).

This sequence belongs to the cytidylate kinase family. Type 1 subfamily.

Its subcellular location is the cytoplasm. The catalysed reaction is CMP + ATP = CDP + ADP. It carries out the reaction dCMP + ATP = dCDP + ADP. This is Cytidylate kinase from Shewanella sp. (strain MR-7).